A 332-amino-acid chain; its full sequence is Palmitoyltransferase PFA3 (332 aa).

At 1–13 (MNLVNNFSKLFPR) the chain is on the cytoplasmic side. A helical transmembrane segment spans residues 14 to 34 (CLTTGLYLWSLYAIVVCIHVI). The Lumenal portion of the chain corresponds to 35–37 (RAR). The helical transmembrane segment at 38–58 (VVLPLVFTIAMVALYTYAKLI) threads the bilayer. Topologically, residues 59 to 147 (YVGPGTTKEY…AGCVGYRNQK (89 aa)) are cytoplasmic. Positions 104–154 (RVCKSCSSWKPDRCHHCSTCNVCVLKMDHHCPWFAGCVGYRNQKFFIQFLI) constitute a DHHC domain. A helical membrane pass occupies residues 148 to 168 (FFIQFLIYCTVYSILVLILSS). At 169 to 188 (MEIYTWFKGEFFEVELINFT) the chain is on the lumenal side. Residues 189 to 209 (LLSLWLLALVVSISITIFTVF) form a helical membrane-spanning segment. Residues 210-332 (SISQVCQNQT…SLDVDRSNFV (123 aa)) are Cytoplasmic-facing.

It belongs to the DHHC palmitoyltransferase family. PFA3 subfamily. Post-translationally, autopalmitoylated.

It is found in the vacuole membrane. The enzyme catalyses L-cysteinyl-[protein] + hexadecanoyl-CoA = S-hexadecanoyl-L-cysteinyl-[protein] + CoA. Functionally, palmitoyltransferase specific for VAC8. Palmitoylates VAC8 at one or more of its N-terminal cysteine residues, which is required for its proper membrane localization. The protein is Palmitoyltransferase PFA3 (PFA3) of Candida glabrata (strain ATCC 2001 / BCRC 20586 / JCM 3761 / NBRC 0622 / NRRL Y-65 / CBS 138) (Yeast).